Consider the following 293-residue polypeptide: Ribonuclease H2 subunit B (293 aa).

Residues 251-278 (KRPQNSDITSSLLKKPNRKQATKKSKYF) form a disordered region. The span at 265 to 276 (KPNRKQATKKSK) shows a compositional bias: basic residues.

It belongs to the RNase H2 subunit B family. As to quaternary structure, component of the RNase H2 complex.

It is found in the nucleus. The protein resides in the cytoplasm. In terms of biological role, non catalytic subunit of RNase H2, an endonuclease that specifically degrades the RNA of RNA:DNA hybrids. Participates in DNA replication, possibly by mediating the removal of lagging-strand Okazaki fragment RNA primers during DNA replication. Mediates the excision of single ribonucleotides from DNA:RNA duplexes. The chain is Ribonuclease H2 subunit B (rnh202) from Schizosaccharomyces pombe (strain 972 / ATCC 24843) (Fission yeast).